Here is a 101-residue protein sequence, read N- to C-terminus: Large ribosomal subunit protein eL30 (101 aa).

It belongs to the eukaryotic ribosomal protein eL30 family.

The sequence is that of Large ribosomal subunit protein eL30 from Pyrobaculum islandicum (strain DSM 4184 / JCM 9189 / GEO3).